The sequence spans 60 residues: Arabinogalactan protein 14 (60 aa).

The N-terminal stretch at 1-28 (MEAMKMKLYVVVLVAVIAFSTVHQTVAA) is a signal peptide. A 4-hydroxyproline mark is found at P32, P34, and P36. P32, P34, and P36 each carry an O-linked (Ara...) hydroxyproline glycan. The GPI-anchor amidated serine moiety is linked to residue S38. A propeptide spans 39–60 (DASSFIPTFFASVAVMAFGFFF) (removed in mature form).

Belongs to the AG-peptide AGP family. In terms of processing, contains 4-hydroxyproline; hydroxylated on Pro-32, Pro-34 and Pro-36. Post-translationally, O-glycosylated on hydroxyprolines; noncontiguous hydroxylproline residues are glycosylated with arabinogalactan.

The protein resides in the cell membrane. Functionally, proteoglycan that seems to be implicated in diverse developmental roles such as differentiation, cell-cell recognition, embryogenesis and programmed cell death. Involved in the regulation of root hair elongation. The polypeptide is Arabinogalactan protein 14 (Arabidopsis thaliana (Mouse-ear cress)).